The chain runs to 517 residues: MSPLNGVARSFPRPFQAVTRRPFRVVQPAIACPSNSRSFNHSRSLRSTGSQSPAPSPRDSSNPALSFPCLDAQEAKSALLSARSLGSGPEPSYTAGHHERFHSDEPLLLDWGGLLPEFDIAYETWGQLNEKKDNVILLHTGLSASSHAHSTEANPKPGWWEKFIGPGKTLDTDKYFVICTNVLGGCYGSTGPSTVDPSDGKKYATRFPILTIEDMVRAQFRLLDHLGVRKLYASVGSSMGGMQSLAAGVLFPERVGKIVSISGCARSHPYSIAMRHTQRQVLMMDPNWARGFYYDSIPPHSGMKLAREIATVTYRSGPEWEKRFGRKRADPSKQPALCPDFLIETYLDHAGEKFCLEYDANSLLYISKAMDLFDLGLTQQLATKKQRAEAQAKISSGTNTVNDASCSLTLPEQPYQEQPSASTSAEQSASASETGSAPNDLVAGLAPLKDHQVLVIGVASDILFPAWQQREIAETLIQAGNKTVEHIELGNDVSLFGHDTFLLDVKNVGGAVRKFLD.

A mitochondrion-targeting transit peptide spans 1–46; the sequence is MSPLNGVARSFPRPFQAVTRRPFRVVQPAIACPSNSRSFNHSRSLR. Residues 36 to 64 are compositionally biased toward polar residues; sequence SRSFNHSRSLRSTGSQSPAPSPRDSSNPA. Residues 36–66 form a disordered region; that stretch reads SRSFNHSRSLRSTGSQSPAPSPRDSSNPALS. The AB hydrolase-1 domain occupies 134–386; sequence NVILLHTGLS…LTQQLATKKQ (253 aa). The interval 141–144 is important for substrate specificity; the sequence is GLSA. Residue Ser-238 is the Nucleophile of the active site. Arg-307 contributes to the substrate binding site. A disordered region spans residues 413-436; sequence QPYQEQPSASTSAEQSASASETGS. Over residues 416-436 the composition is skewed to low complexity; the sequence is QEQPSASTSAEQSASASETGS. Active-site residues include Asp-461 and His-498. A substrate-binding site is contributed by Asp-499.

Belongs to the AB hydrolase superfamily. MetX family.

The protein localises to the mitochondrion. It carries out the reaction succinyl-CoA + L-serine = O-succinyl-L-serine + CoA. It functions in the pathway amino-acid biosynthesis; L-cysteine biosynthesis; L-cysteine from L-serine: step 1/2. In terms of biological role, transfers a succinyl group from succinyl-CoA to L-serine, forming succinyl-L-serine. Also has weak serine acetyl transferase activity and homoserine succinyl transferase activity. This Emericella nidulans (strain FGSC A4 / ATCC 38163 / CBS 112.46 / NRRL 194 / M139) (Aspergillus nidulans) protein is Serine O-succinyltransferase.